Consider the following 192-residue polypeptide: Adenylate kinase (192 aa).

10–15 (GAGKGT) contributes to the ATP binding site. The interval 30–59 (STGDMLREVIAKETEVGKKAKAIISSGALV) is NMP. Residues Thr31, Arg36, 57–59 (ALV), 85–88 (GYPR), and Gln92 contribute to the AMP site. An LID region spans residues 126 to 142 (RRVQETVAAGGQVRLDD). Arg127 is a binding site for ATP. AMP-binding residues include Arg139 and Arg150. Ile178 provides a ligand contact to ATP.

This sequence belongs to the adenylate kinase family. In terms of assembly, monomer.

It is found in the cytoplasm. The catalysed reaction is AMP + ATP = 2 ADP. Its pathway is purine metabolism; AMP biosynthesis via salvage pathway; AMP from ADP: step 1/1. Its function is as follows. Catalyzes the reversible transfer of the terminal phosphate group between ATP and AMP. Plays an important role in cellular energy homeostasis and in adenine nucleotide metabolism. This chain is Adenylate kinase, found in Bartonella tribocorum (strain CIP 105476 / IBS 506).